Reading from the N-terminus, the 589-residue chain is Progranulin (589 aa).

The signal sequence occupies residues 1–17 (MWVLMSWLAFAAGLVAG). A glycan (N-linked (GlcNAc...) asparagine) is linked at Asn38. Disulfide bonds link Cys125-Cys138 and Cys132-Cys148. Asn263 carries an N-linked (GlcNAc...) asparagine glycan. 10 cysteine pairs are disulfide-bonded: Cys282-Cys294, Cys288-Cys304, Cys295-Cys312, Cys305-Cys319, Cys313-Cys326, Cys320-Cys333, Cys364-Cys376, Cys370-Cys386, Cys395-Cys408, and Cys402-Cys414. Asn373 carries an N-linked (GlcNAc...) asparagine glycan. Asn526 is a glycosylation site (N-linked (GlcNAc...) asparagine).

The protein belongs to the granulin family. Progranulin is secreted as a homodimer. Interacts with SLPI; interaction protects progranulin from proteolysis. Interacts (via region corresponding to granulin-7 peptide) with CTSD; stabilizes CTSD and increases its proteolytic activity. Interacts (via region corresponding to granulin-7 peptide) with SORT1; this interaction mediates endocytosis and lysosome delivery of progranulin; interaction occurs at the neuronal cell surface in a stressed nervous system. Interacts with PSAP; facilitates lysosomal delivery of progranulin from the extracellular space and the biosynthetic pathway. Forms a complex with PSAP and M6PR; PSAP bridges the binding between progranulin and M6PR. Forms a complex with PSAP and SORT1; progranulin bridges the interaction between PSAP and SORT1; facilitates lysosomal targeting of PSAP via SORT1; interaction enhances PSAP uptake in primary cortical neurons. Interacts (via regions corresponding to granulin-2 and granulin-7 peptides) with GBA1; this interaction prevents aggregation of GBA1-SCARB2 complex via interaction with HSPA1A upon stress. Interacts (via region corresponding to granulin-7 peptide) with HSPA1A; mediates recruitment of HSPA1A to GBA1 and prevents GBA1 aggregation in response to stress. N-glycosylated. Post-translationally, cleaved by ELANE; proteolysis is blocked by SLPI and is concentration- and time-dependent and induces CXCL8/IL-8 production; granulin-3 and granulin-4 are resistant to ELANE. Cleaved by CTSL in lysosome thus regulating the maturation and turnover of progranulin within the lysosome. As to expression, highly expressed at the wound site and diminishes away from the wound. Not expressed in fibroblasts and endothelial cells in intact skin. In adult brain, expressed primarily in neurons and in resting and reactive microglia. Expressed in both neurons and microglia. Highly expressed in activated microglia in response to injury. Expressed in macrophage.

The protein localises to the secreted. Its subcellular location is the lysosome. Secreted protein that acts as a key regulator of lysosomal function and as a growth factor involved in inflammation, wound healing and cell proliferation. Regulates protein trafficking to lysosomes, and also the activity of lysosomal enzymes. Also facilitates the acidification of lysosomes, causing degradation of mature CTSD by CTSB. In addition, functions as a wound-related growth factor that acts directly on dermal fibroblasts and endothelial cells to promote division, migration and the formation of capillary-like tubule structures. Also promotes epithelial cell proliferation by blocking TNF-mediated neutrophil activation preventing release of oxidants and proteases. Moreover, modulates inflammation in neurons by preserving neurons survival, axonal outgrowth and neuronal integrity. Its function is as follows. Inhibits epithelial cell proliferation and induces epithelial cells to secrete IL-8. In terms of biological role, stabilizes CTSD through interaction with CTSD leading to maintain its aspartic-type peptidase activity. This is Progranulin (Grn) from Mus musculus (Mouse).